A 134-amino-acid polypeptide reads, in one-letter code: Small ribosomal subunit protein uS11 (134 aa).

2 disordered regions span residues 1–22 (MPPK…KNVA) and 114–134 (SIQD…RRRV). The segment covering 9–22 (AAKKVRRKEKKNVA) has biased composition (basic residues).

It belongs to the universal ribosomal protein uS11 family. As to quaternary structure, part of the 30S ribosomal subunit. Interacts with proteins S7 and S18. Binds to IF-3.

Functionally, located on the platform of the 30S subunit, it bridges several disparate RNA helices of the 16S rRNA. Forms part of the Shine-Dalgarno cleft in the 70S ribosome. The sequence is that of Small ribosomal subunit protein uS11 from Streptomyces avermitilis (strain ATCC 31267 / DSM 46492 / JCM 5070 / NBRC 14893 / NCIMB 12804 / NRRL 8165 / MA-4680).